Consider the following 337-residue polypeptide: Protein XAP5 CIRCADIAN TIMEKEEPER (337 aa).

S2 carries the N-acetylserine modification. Coiled coils occupy residues Q13–S41 and T72–R121. A compositionally biased stretch (basic and acidic residues) spans K23–S37. The tract at residues K23–G47 is disordered. Residues K38–G47 are compositionally biased toward polar residues. The segment at A125 to A174 is disordered. The segment covering E126–G137 has biased composition (acidic residues). S132 carries the phosphoserine modification. Positions D165 to A174 are enriched in basic and acidic residues.

The protein belongs to the FAM50 family. As to expression, expressed in leaves stems, flowers, roots, trichomes and hypocotyls.

The protein resides in the nucleus. Functionally, involved in light regulation of the circadian clock and photomorphogenesis. May play a global role in coordinating growth in response to the light environment. Acts as a light quality sensor directing both negative and positive transcriptional regulation. Inhibits growth in red light but promote growth in blue light. Inhibits clock gene expression in diurnal cycles. Plays no role in the control of flowering time. The polypeptide is Protein XAP5 CIRCADIAN TIMEKEEPER (XCT) (Arabidopsis thaliana (Mouse-ear cress)).